The following is a 256-amino-acid chain: Small ribosomal subunit protein uS3 (256 aa).

Residues 39–121 (IRTYLTKQLS…TIRINVVEVT (83 aa)) form the KH type-2 domain. The segment at 227-256 (RHEQKFPLQQPKRRQQRRRPTFEDRSAQEA) is disordered. The segment covering 246 to 256 (PTFEDRSAQEA) has biased composition (basic and acidic residues).

It belongs to the universal ribosomal protein uS3 family. In terms of assembly, part of the 30S ribosomal subunit. Forms a tight complex with proteins S10 and S14.

Functionally, binds the lower part of the 30S subunit head. Binds mRNA in the 70S ribosome, positioning it for translation. The polypeptide is Small ribosomal subunit protein uS3 (Synechococcus sp. (strain JA-2-3B'a(2-13)) (Cyanobacteria bacterium Yellowstone B-Prime)).